The chain runs to 378 residues: Peptide chain release factor RF2 (378 aa).

An N5-methylglutamine modification is found at Gln-253.

Belongs to the prokaryotic/mitochondrial release factor family. As to quaternary structure, interacts with the ribosome. Interacts with ribosomal protein L11. Recruited to stalled E.coli ribosomes by E.coli ArfA.

The protein localises to the cytoplasm. Functionally, peptide chain release factor 2 directs the termination of translation in response to the peptide chain termination codons UGA and UAA. In endogenous ribosomes interacts with P-site tRNA and 23S rRNA. In the presence of truncated mRNA in the 70S ribosome, ArfA and RF2 interact such that the GGQ peptide hydrolysis motif of RF2 rises into the peptidyl-transferase center and releases the ribosome. Recruited to stalled E.coli 70S ribosomes by E.coli ArfA, but cannot be functionally accomodated in the peptidyl-transferase center. Note T.thermophilus probably does not encode arfA. The chain is Peptide chain release factor RF2 (prfB) from Thermus thermophilus (strain ATCC 27634 / DSM 579 / HB8).